Consider the following 324-residue polypeptide: Cuticle collagen lon-3 (324 aa).

An N-terminal signal peptide occupies residues 1 to 30 (MSVTTATSGALIFSGASLLVSLFAAASIYS). The interval 119–324 (VENTCPTGPD…AWRRKHKRVY (206 aa)) is disordered. Triple-helical region stretches follow at residues 129 to 152 (GEEGEQGPDGQDGVDGVPGFDGQD), 170 to 229 (GLPG…KGDD), and 235 to 294 (GRQG…SGLP). Composition is skewed to low complexity over residues 136–151 (PDGQDGVDGVPGFDGQ), 168–181 (PQGLPGPQGSQGAP), 210–223 (PTGAPGDDGAPGAS), 235–246 (GRQGQRGQPGEQ), and 261–273 (EGPPGVEGEVGVP). Basic and acidic residues predominate over residues 296-311 (KDAEYCKCPTRDDGGN). Over residues 314–324 (RAWRRKHKRVY) the composition is skewed to basic residues.

This sequence belongs to the cuticular collagen family. In terms of assembly, collagen polypeptide chains are complexed within the cuticle by disulfide bonds and other types of covalent cross-links.

Its function is as follows. Nematode cuticles are composed largely of collagen-like proteins. The cuticle functions both as an exoskeleton and as a barrier to protect the worm from its environment. Dose-dependent regulator of body length and shape. This Caenorhabditis elegans protein is Cuticle collagen lon-3 (lon-3).